A 363-amino-acid polypeptide reads, in one-letter code: Lactose transport ATP-binding protein LacK (363 aa).

One can recognise an ABC transporter domain in the interval 4 to 234 (VRLTDIRKSY…PDNMFVAGFI (231 aa)). 36 to 43 (GPSGCGKS) lines the ATP pocket.

This sequence belongs to the ABC transporter superfamily.

The protein localises to the cell inner membrane. Its function is as follows. Part of the binding-protein-dependent transport system for lactose. Probably responsible for energy coupling to the transport system. This Rhizobium radiobacter (Agrobacterium tumefaciens) protein is Lactose transport ATP-binding protein LacK (lacK).